The primary structure comprises 144 residues: MKSYIAKAQEVERKWYVVDAAGKPLGRVASQVASILRGKNKPTFTPNVDCGDFVIVINAEEVALTGKKLDQKMLRKHSFYPGGLKETPYREVLAKKPEFAFEEAVRRMLPKGVLGRQMLKKLKVYRGAEHDHAAQKPEVLELKY.

It belongs to the universal ribosomal protein uL13 family. In terms of assembly, part of the 50S ribosomal subunit.

Functionally, this protein is one of the early assembly proteins of the 50S ribosomal subunit, although it is not seen to bind rRNA by itself. It is important during the early stages of 50S assembly. The chain is Large ribosomal subunit protein uL13 from Clostridium botulinum (strain Alaska E43 / Type E3).